The chain runs to 140 residues: uncharacterized protein (140 aa).

The tract at residues 62 to 140 (TEARAGRGGP…PQGRWGPSLG (79 aa)) is disordered. Residues 71-94 (PATARSRVSADSQGGRAGSSSPSS) are compositionally biased toward low complexity.

This is an uncharacterized protein from Homo sapiens (Human).